Consider the following 510-residue polypeptide: Histidine ammonia-lyase (510 aa).

Positions Ala143 to Gly145 form a cross-link, 5-imidazolinone (Ala-Gly). Ser144 is modified (2,3-didehydroalanine (Ser)).

It belongs to the PAL/histidase family. In terms of processing, contains an active site 4-methylidene-imidazol-5-one (MIO), which is formed autocatalytically by cyclization and dehydration of residues Ala-Ser-Gly.

It is found in the cytoplasm. The catalysed reaction is L-histidine = trans-urocanate + NH4(+). The protein operates within amino-acid degradation; L-histidine degradation into L-glutamate; N-formimidoyl-L-glutamate from L-histidine: step 1/3. This Shewanella pealeana (strain ATCC 700345 / ANG-SQ1) protein is Histidine ammonia-lyase.